Here is a 356-residue protein sequence, read N- to C-terminus: MQETALLERESAGTGNAPVRTDWTREEIAALFDLPFTELLFRAAEVHRAHHRAGEVQLCTLLSIKTGGCPEDCGYCSQSVKADSGVEATKLMEVQKVLQSAAQAKDNGSKRFCMGAAWRNPKDRDMPAIISMIKGVREMGMETCMTLGMLTPSQAAQLADAGLDYYNHNIDTSPERYEEVITTRTFADRLQTLDNVRNAGINVCSGGIVGMGETRADRVGFVHALATLEQHPESVPVNALVPIKGTVLGDMLADTPLAKIDDIEFVRTVAVARITMPLSMVRLSAGRESMSEATQALCFMAGANSIFTGDKLLTAANAGDDADAAMFKRLGLKPMEGEEPMRAMKSVGGCSGGCAA.

The Radical SAM core domain maps to 54 to 278 (GEVQLCTLLS…VAVARITMPL (225 aa)). Residues Cys69, Cys73, and Cys76 each contribute to the [4Fe-4S] cluster site. The [2Fe-2S] cluster site is built by Cys113, Cys144, Cys204, and Arg282.

This sequence belongs to the radical SAM superfamily. Biotin synthase family. As to quaternary structure, homodimer. [4Fe-4S] cluster serves as cofactor. [2Fe-2S] cluster is required as a cofactor.

The enzyme catalyses (4R,5S)-dethiobiotin + (sulfur carrier)-SH + 2 reduced [2Fe-2S]-[ferredoxin] + 2 S-adenosyl-L-methionine = (sulfur carrier)-H + biotin + 2 5'-deoxyadenosine + 2 L-methionine + 2 oxidized [2Fe-2S]-[ferredoxin]. It participates in cofactor biosynthesis; biotin biosynthesis; biotin from 7,8-diaminononanoate: step 2/2. Functionally, catalyzes the conversion of dethiobiotin (DTB) to biotin by the insertion of a sulfur atom into dethiobiotin via a radical-based mechanism. This chain is Biotin synthase, found in Novosphingobium aromaticivorans (strain ATCC 700278 / DSM 12444 / CCUG 56034 / CIP 105152 / NBRC 16084 / F199).